A 187-amino-acid chain; its full sequence is Chromophore lyase CpcS/CpeS 2 (187 aa).

Belongs to the CpcS/CpeS biliprotein lyase family.

Covalently attaches a chromophore to Cys residue(s) of phycobiliproteins. This Synechococcus sp. (strain JA-3-3Ab) (Cyanobacteria bacterium Yellowstone A-Prime) protein is Chromophore lyase CpcS/CpeS 2.